We begin with the raw amino-acid sequence, 98 residues long: NADH-ubiquinone oxidoreductase chain 4L (98 aa).

Helical transmembrane passes span 1–21 (MLPI…GVLI), 29–49 (TLLC…LMIT), and 59–79 (IPLI…ALLV).

The protein belongs to the complex I subunit 4L family. In terms of assembly, core subunit of respiratory chain NADH dehydrogenase (Complex I) which is composed of 45 different subunits.

It localises to the mitochondrion inner membrane. It carries out the reaction a ubiquinone + NADH + 5 H(+)(in) = a ubiquinol + NAD(+) + 4 H(+)(out). Core subunit of the mitochondrial membrane respiratory chain NADH dehydrogenase (Complex I) which catalyzes electron transfer from NADH through the respiratory chain, using ubiquinone as an electron acceptor. Part of the enzyme membrane arm which is embedded in the lipid bilayer and involved in proton translocation. This is NADH-ubiquinone oxidoreductase chain 4L (MT-ND4L) from Phascogale tapoatafa (Common wambenger).